A 252-amino-acid polypeptide reads, in one-letter code: Type III pantothenate kinase (252 aa).

6–13 (DIGNTTTE) contacts ATP. Substrate-binding positions include tyrosine 100 and 107-110 (GADR). Residue aspartate 109 is the Proton acceptor of the active site. K(+) is bound at residue aspartate 129. Threonine 132 lines the ATP pocket. Threonine 184 serves as a coordination point for substrate.

It belongs to the type III pantothenate kinase family. As to quaternary structure, homodimer. Requires NH4(+) as cofactor. The cofactor is K(+).

The protein resides in the cytoplasm. The catalysed reaction is (R)-pantothenate + ATP = (R)-4'-phosphopantothenate + ADP + H(+). Its pathway is cofactor biosynthesis; coenzyme A biosynthesis; CoA from (R)-pantothenate: step 1/5. Catalyzes the phosphorylation of pantothenate (Pan), the first step in CoA biosynthesis. The polypeptide is Type III pantothenate kinase (Sulfurihydrogenibium sp. (strain YO3AOP1)).